We begin with the raw amino-acid sequence, 186 residues long: MGPSTSPLVGCNGDRKVLQQPVKITLMEKWFPGDVAESTLDPAQAPLYQYTEGVDEANEGCPRAFVTLKAGVEEDALKYSFVGCCSNFDEVVSRMTKESWIELRNTRGQISSRASLRRKKGAVRAMKYILSTNVGEHVPKSSILRHWNEYLLILARNRDSSLPFRFSFGSKVRALPLSSLPSLAAH.

This is an uncharacterized protein from Trypanosoma brucei brucei.